A 167-amino-acid chain; its full sequence is Sporulation membrane protein YtrI (167 aa).

A helical transmembrane segment spans residues 15-35; that stretch reads FFAGMMCGAVISWFFFLFTYG.

The protein localises to the cell membrane. Involved in sporulation. The polypeptide is Sporulation membrane protein YtrI (ytrI) (Bacillus subtilis (strain 168)).